A 56-amino-acid chain; its full sequence is Small ribosomal subunit protein uS14 (56 aa).

4 residues coordinate Zn(2+): Cys-21, Cys-24, Cys-39, and Cys-42.

This sequence belongs to the universal ribosomal protein uS14 family. As to quaternary structure, component of the 40S small ribosomal subunit. It depends on Zn(2+) as a cofactor.

Its subcellular location is the cytoplasm. It localises to the cytosol. The protein localises to the rough endoplasmic reticulum. This chain is Small ribosomal subunit protein uS14 (RpS29), found in Scarabaeus laticollis (Scarab dung beetle).